Here is a 233-residue protein sequence, read N- to C-terminus: Enolase-phosphatase E1 (233 aa).

This sequence belongs to the HAD-like hydrolase superfamily. MasA/MtnC family. In terms of assembly, monomer. It depends on Mg(2+) as a cofactor.

It carries out the reaction 5-methylsulfanyl-2,3-dioxopentyl phosphate + H2O = 1,2-dihydroxy-5-(methylsulfanyl)pent-1-en-3-one + phosphate. It participates in amino-acid biosynthesis; L-methionine biosynthesis via salvage pathway; L-methionine from S-methyl-5-thio-alpha-D-ribose 1-phosphate: step 3/6. It functions in the pathway amino-acid biosynthesis; L-methionine biosynthesis via salvage pathway; L-methionine from S-methyl-5-thio-alpha-D-ribose 1-phosphate: step 4/6. In terms of biological role, bifunctional enzyme that catalyzes the enolization of 2,3-diketo-5-methylthiopentyl-1-phosphate (DK-MTP-1-P) into the intermediate 2-hydroxy-3-keto-5-methylthiopentenyl-1-phosphate (HK-MTPenyl-1-P), which is then dephosphorylated to form the acireductone 1,2-dihydroxy-3-keto-5-methylthiopentene (DHK-MTPene). The chain is Enolase-phosphatase E1 from Hahella chejuensis (strain KCTC 2396).